The chain runs to 375 residues: Chaperone protein DnaJ (375 aa).

The J domain maps to 5 to 70 (DYYELLGISR…EKRAAYDQYG (66 aa)). A CR-type zinc finger spans residues 132–210 (GTTKDIKIHT…CHGDGRVNKA (79 aa)). 8 residues coordinate Zn(2+): Cys145, Cys148, Cys162, Cys165, Cys184, Cys187, Cys198, and Cys201. CXXCXGXG motif repeat units follow at residues 145 to 152 (CDTCHGTG), 162 to 169 (CPHCHGAG), 184 to 191 (CHFCHGTG), and 198 to 205 (CKTCHGDG).

It belongs to the DnaJ family. Homodimer. The cofactor is Zn(2+).

It is found in the cytoplasm. Participates actively in the response to hyperosmotic and heat shock by preventing the aggregation of stress-denatured proteins and by disaggregating proteins, also in an autonomous, DnaK-independent fashion. Unfolded proteins bind initially to DnaJ; upon interaction with the DnaJ-bound protein, DnaK hydrolyzes its bound ATP, resulting in the formation of a stable complex. GrpE releases ADP from DnaK; ATP binding to DnaK triggers the release of the substrate protein, thus completing the reaction cycle. Several rounds of ATP-dependent interactions between DnaJ, DnaK and GrpE are required for fully efficient folding. Also involved, together with DnaK and GrpE, in the DNA replication of plasmids through activation of initiation proteins. The sequence is that of Chaperone protein DnaJ from Aggregatibacter actinomycetemcomitans (Actinobacillus actinomycetemcomitans).